We begin with the raw amino-acid sequence, 94 residues long: Neutrophil defensin 1 (94 aa).

The N-terminal stretch at 1 to 19 (MRTLAILAAILLVALQAQA) is a signal peptide. Positions 20–64 (EPLQARADEVAAAPEQIPADNPEVVVSLAWDESLAPKHPGSRKNV) are excised as a propeptide. Cystine bridges form between Cys-66–Cys-94, Cys-68–Cys-83, and Cys-73–Cys-93. ADP-ribosylarginine; by ART1 is present on Arg-78. Tyr-85 carries the phosphotyrosine modification. At Arg-88 the chain carries ADP-ribosylarginine; by ART1.

It belongs to the alpha-defensin family. In terms of assembly, tetramer. Dimer. Interacts with RETN. In terms of processing, ADP-ribosylation drastically reduces cytotoxic and antibacterial activities, and enhances IL8 production.

The protein resides in the secreted. Effector molecule of the innate immune system that acts via antibiotic-like properties against a broad array of infectious agents including bacteria, fungi, and viruses or by promoting the activation and maturation of some APCs. Interacts with the essential precursor of cell wall synthesis lipid II to inhibit bacterial cell wall synthesis. Inhibits adenovirus infection via inhibition of viral disassembly at the vertex region, thereby restricting the release of internal capsid protein pVI, which is required for endosomal membrane penetration during cell entry. In addition, interaction with adenovirus capsid leads to the redirection of viral particles to TLR4 thereby promoting a NLRP3-mediated inflammasome response and interleukin 1-beta (IL-1beta) release. Induces the production of proinflammatory cytokines including type I interferon (IFN) in plasmacytoid dendritic cells (pDCs) by triggering the degradation of NFKBIA and nuclear translocation of IRF1, both of which are required for activation of pDCs. This is Neutrophil defensin 1 (DEFA1) from Pan troglodytes (Chimpanzee).